Reading from the N-terminus, the 440-residue chain is Xylose isomerase (440 aa).

Catalysis depends on residues His-101 and Asp-104. Glu-232, Glu-268, His-271, Asp-296, Asp-307, Asp-309, and Asp-339 together coordinate Mg(2+).

The protein belongs to the xylose isomerase family. In terms of assembly, homotetramer. Mg(2+) is required as a cofactor.

The protein resides in the cytoplasm. It catalyses the reaction alpha-D-xylose = alpha-D-xylulofuranose. The chain is Xylose isomerase from Escherichia fergusonii (strain ATCC 35469 / DSM 13698 / CCUG 18766 / IAM 14443 / JCM 21226 / LMG 7866 / NBRC 102419 / NCTC 12128 / CDC 0568-73).